The chain runs to 355 residues: UDP-N-acetylglucosamine--N-acetylmuramyl-(pentapeptide) pyrophosphoryl-undecaprenol N-acetylglucosamine transferase (355 aa).

UDP-N-acetyl-alpha-D-glucosamine-binding positions include 15-17 (TGG), Asn-127, Arg-163, Ser-191, Ile-244, 263-268 (ALTVSE), and Gln-288.

This sequence belongs to the glycosyltransferase 28 family. MurG subfamily.

It localises to the cell inner membrane. It catalyses the reaction di-trans,octa-cis-undecaprenyl diphospho-N-acetyl-alpha-D-muramoyl-L-alanyl-D-glutamyl-meso-2,6-diaminopimeloyl-D-alanyl-D-alanine + UDP-N-acetyl-alpha-D-glucosamine = di-trans,octa-cis-undecaprenyl diphospho-[N-acetyl-alpha-D-glucosaminyl-(1-&gt;4)]-N-acetyl-alpha-D-muramoyl-L-alanyl-D-glutamyl-meso-2,6-diaminopimeloyl-D-alanyl-D-alanine + UDP + H(+). Its pathway is cell wall biogenesis; peptidoglycan biosynthesis. Functionally, cell wall formation. Catalyzes the transfer of a GlcNAc subunit on undecaprenyl-pyrophosphoryl-MurNAc-pentapeptide (lipid intermediate I) to form undecaprenyl-pyrophosphoryl-MurNAc-(pentapeptide)GlcNAc (lipid intermediate II). The polypeptide is UDP-N-acetylglucosamine--N-acetylmuramyl-(pentapeptide) pyrophosphoryl-undecaprenol N-acetylglucosamine transferase (Salmonella gallinarum (strain 287/91 / NCTC 13346)).